The primary structure comprises 252 residues: Triosephosphate isomerase (252 aa).

Position 10–12 (10–12) interacts with substrate; the sequence is NWK. The active-site Electrophile is the histidine 96. Glutamate 168 acts as the Proton acceptor in catalysis. Substrate-binding positions include glycine 174, serine 214, and 235–236; that span reads GG.

It belongs to the triosephosphate isomerase family. Homodimer.

It is found in the cytoplasm. It catalyses the reaction D-glyceraldehyde 3-phosphate = dihydroxyacetone phosphate. The protein operates within carbohydrate biosynthesis; gluconeogenesis. It participates in carbohydrate degradation; glycolysis; D-glyceraldehyde 3-phosphate from glycerone phosphate: step 1/1. In terms of biological role, involved in the gluconeogenesis. Catalyzes stereospecifically the conversion of dihydroxyacetone phosphate (DHAP) to D-glyceraldehyde-3-phosphate (G3P). This is Triosephosphate isomerase from Streptococcus mutans serotype c (strain ATCC 700610 / UA159).